Here is a 455-residue protein sequence, read N- to C-terminus: Gamma-aminobutyric acid receptor subunit alpha-1 (455 aa).

An N-terminal signal peptide occupies residues M1–G27. The Extracellular portion of the chain corresponds to Q28–F252. N37 is a glycosylation site (N-linked (GlcNAc...) asparagine). R93 is a 4-aminobutanoate binding site. A glycan (N-linked (GlcNAc...) asparagine) is linked at N137. T156 is a binding site for 4-aminobutanoate. Cysteines 165 and 179 form a disulfide. The chain crosses the membrane as a helical span at residues V253–L273. At N274–V278 the chain is on the cytoplasmic side. Residues P279–R300 traverse the membrane as a helical segment. Residues N301–T310 lie on the Extracellular side of the membrane. The helical transmembrane segment at A311–T332 threads the bilayer. The Cytoplasmic segment spans residues V333–R420. The chain crosses the membrane as a helical span at residues L421–T440. The Extracellular portion of the chain corresponds to Y441–Q455.

Belongs to the ligand-gated ion channel (TC 1.A.9) family. Gamma-aminobutyric acid receptor (TC 1.A.9.5) subfamily. GABRA1 sub-subfamily. In terms of assembly, heteropentamer, formed by a combination of alpha (GABRA1-6), beta (GABRB1-3), gamma (GABRG1-3), delta (GABRD), epsilon (GABRE), rho (GABRR1-3), pi (GABRP) and theta (GABRQ) subunits, each subunit exhibiting distinct physiological and pharmacological properties. Interacts with UBQLN1. Interacts with TRAK1. Interacts with KIF21B. Identified in a complex of 720 kDa composed of LHFPL4, NLGN2, GABRA1, GABRB2, GABRG2 and GABRB3. Interacts with LHFPL4. Interacts with NLGN2. Interacts with SHISA7; interaction leads to the regulation of GABA(A) receptor trafficking, channel deactivation kinetics and pharmacology. Glycosylated. Expressed in the cerebellum.

It localises to the postsynaptic cell membrane. The protein localises to the cell membrane. It is found in the cytoplasmic vesicle membrane. It catalyses the reaction chloride(in) = chloride(out). Its activity is regulated as follows. Allosterically activated by benzodiazepines, the neuroanesthetic alphaxalone and pentobarbital. Inhibited by the antagonist bicuculline. Potentiated by histamine. Alpha subunit of the heteropentameric ligand-gated chloride channel gated by Gamma-aminobutyric acid (GABA), a major inhibitory neurotransmitter in the brain. GABA-gated chloride channels, also named GABA(A) receptors (GABAAR), consist of five subunits arranged around a central pore and contain GABA active binding site(s) located at the alpha and beta subunit interface(s). When activated by GABA, GABAARs selectively allow the flow of chloride anions across the cell membrane down their electrochemical gradient. Alpha-1/GABRA1-containing GABAARs are largely synaptic. Chloride influx into the postsynaptic neuron following GABAAR opening decreases the neuron ability to generate a new action potential, thereby reducing nerve transmission. GABAARs containing alpha-1 and beta-2 or -3 subunits exhibit synaptogenic activity; the gamma-2 subunit being necessary but not sufficient to induce rapid synaptic contacts formation. GABAARs function also as histamine receptor where histamine binds at the interface of two neighboring beta subunits and potentiates GABA response. GABAARs containing alpha, beta and epsilon subunits also permit spontaneous chloride channel activity while preserving the structural information required for GABA-gated openings. Alpha-1-mediated plasticity in the orbitofrontal cortex regulates context-dependent action selection. Together with rho subunits, may also control neuronal and glial GABAergic transmission in the cerebellum. This Mus musculus (Mouse) protein is Gamma-aminobutyric acid receptor subunit alpha-1.